We begin with the raw amino-acid sequence, 503 residues long: Serine/threonine-protein kinase chk-1 (503 aa).

The Protein kinase domain maps to 24-286; the sequence is YRVVQTLGEG…IEQIQADPWY (263 aa). Residues 30–38 and lysine 54 each bind ATP; that span reads LGEGAFGEV. Residue aspartate 150 is the Proton acceptor of the active site. Positions 320-346 are disordered; that stretch reads SAKRRHLETPNEKSTLAERQNASFSQP. Polar residues predominate over residues 331 to 346; the sequence is EKSTLAERQNASFSQP. The residue at position 344 (serine 344) is a Phosphoserine.

Belongs to the protein kinase superfamily. CAMK Ser/Thr protein kinase family. NIM1 subfamily. As to expression, expressed in the germline.

It localises to the cytoplasm. The protein localises to the nucleus. Its subcellular location is the perinuclear region. It carries out the reaction L-seryl-[protein] + ATP = O-phospho-L-seryl-[protein] + ADP + H(+). It catalyses the reaction L-threonyl-[protein] + ATP = O-phospho-L-threonyl-[protein] + ADP + H(+). Its function is as follows. Serine/threonine-protein kinase which is required for checkpoint-mediated cell cycle arrest and activation of DNA repair in response to the presence of DNA damage or unreplicated DNA. May also negatively regulate cell cycle progression during unperturbed cell cycles. Required for checkpoint mediated cell cycle arrest in response to DNA damage in germline cells. Delays cell-cycle reentry of the Z2 and Z3 primordial germ cells in response to transcription-induced DNA damage as they emerge from cell cycle arrest in L1 larvae. Essential for embryogenesis. This is Serine/threonine-protein kinase chk-1 from Caenorhabditis elegans.